The following is a 404-amino-acid chain: Phosphoglycerate kinase (404 aa).

Residues 21 to 23 (DFN), arginine 36, 59 to 62 (HLGR), arginine 119, and arginine 162 each bind substrate. ATP contacts are provided by residues lysine 213, glycine 300, glutamate 331, and 360-363 (GGDS).

The protein belongs to the phosphoglycerate kinase family. In terms of assembly, monomer.

The protein resides in the cytoplasm. It catalyses the reaction (2R)-3-phosphoglycerate + ATP = (2R)-3-phospho-glyceroyl phosphate + ADP. It functions in the pathway carbohydrate degradation; glycolysis; pyruvate from D-glyceraldehyde 3-phosphate: step 2/5. The polypeptide is Phosphoglycerate kinase (Oenococcus oeni (strain ATCC BAA-331 / PSU-1)).